The primary structure comprises 298 residues: Ethylmalonyl-CoA decarboxylase (298 aa).

It belongs to the enoyl-CoA hydratase/isomerase family.

Its subcellular location is the cytoplasm. The protein localises to the cytosol. The enzyme catalyses (2S)-ethylmalonyl-CoA + H(+) = butanoyl-CoA + CO2. It catalyses the reaction (S)-methylmalonyl-CoA + H(+) = propanoyl-CoA + CO2. It carries out the reaction (2R)-ethylmalonyl-CoA + H(+) = butanoyl-CoA + CO2. Functionally, decarboxylates ethylmalonyl-CoA, a potentially toxic metabolite, to form butyryl-CoA, suggesting it might be involved in metabolite proofreading. Acts preferentially on (S)-ethylmalonyl-CoA but also has some activity on the (R)-isomer. Also has methylmalonyl-CoA decarboxylase activity at lower level. This chain is Ethylmalonyl-CoA decarboxylase (ECHDC1), found in Gallus gallus (Chicken).